A 577-amino-acid polypeptide reads, in one-letter code: Aspartate--tRNA(Asp/Asn) ligase (577 aa).

Glu-171 is a binding site for L-aspartate. Residues 195-198 form an aspartate region; that stretch reads QLFK. Arg-217 is a binding site for L-aspartate. ATP-binding positions include 217–219 and Gln-226; that span reads RDE. His-444 provides a ligand contact to L-aspartate. Glu-474 is a binding site for ATP. L-aspartate is bound at residue Arg-481. Residue 526–529 participates in ATP binding; it reads GFDR.

It belongs to the class-II aminoacyl-tRNA synthetase family. Type 1 subfamily. Homodimer.

The protein localises to the cytoplasm. It carries out the reaction tRNA(Asx) + L-aspartate + ATP = L-aspartyl-tRNA(Asx) + AMP + diphosphate. Aspartyl-tRNA synthetase with relaxed tRNA specificity since it is able to aspartylate not only its cognate tRNA(Asp) but also tRNA(Asn). Reaction proceeds in two steps: L-aspartate is first activated by ATP to form Asp-AMP and then transferred to the acceptor end of tRNA(Asp/Asn). The sequence is that of Aspartate--tRNA(Asp/Asn) ligase from Helicobacter pylori (strain Shi470).